The following is a 512-amino-acid chain: Cytochrome P450 82C3 (512 aa).

Residues 1 to 21 form a helical membrane-spanning segment; sequence MDTSLFSLFVSILVFVFIALF. Cys-451 is a binding site for heme.

The protein belongs to the cytochrome P450 family. Heme serves as cofactor.

It is found in the membrane. This Arabidopsis thaliana (Mouse-ear cress) protein is Cytochrome P450 82C3 (CYP82C3).